We begin with the raw amino-acid sequence, 470 residues long: AAA-ATPase At5g17730 (470 aa).

A signal peptide spans 1–18; sequence MFSLRNLPSLAPFVSAYA. 252–259 is an ATP binding site; the sequence is GPPGTGKT.

The protein belongs to the AAA ATPase family. BCS1 subfamily. The cofactor is Mg(2+).

The catalysed reaction is ATP + H2O = ADP + phosphate + H(+). The polypeptide is AAA-ATPase At5g17730 (Arabidopsis thaliana (Mouse-ear cress)).